A 153-amino-acid chain; its full sequence is Aspartate carbamoyltransferase regulatory chain (153 aa).

Positions 109, 114, 138, and 141 each coordinate Zn(2+).

Belongs to the PyrI family. In terms of assembly, contains catalytic and regulatory chains. Zn(2+) serves as cofactor.

Its function is as follows. Involved in allosteric regulation of aspartate carbamoyltransferase. This Wigglesworthia glossinidia brevipalpis protein is Aspartate carbamoyltransferase regulatory chain.